Consider the following 21-residue polypeptide: Glucan endo-1,3-beta-glucosidase 2 (21 aa).

Residues 1 to 21 (APGDLLWSDEFDGAAGSAPNP) are disordered.

It carries out the reaction Hydrolysis of (1-&gt;3)-beta-D-glucosidic linkages in (1-&gt;3)-beta-D-glucans.. The polypeptide is Glucan endo-1,3-beta-glucosidase 2 (Papiliotrema laurentii (Cryptococcus laurentii)).